A 61-amino-acid polypeptide reads, in one-letter code: Small ribosomal subunit protein uS14 (61 aa).

Positions 24, 27, 40, and 43 each coordinate Zn(2+).

This sequence belongs to the universal ribosomal protein uS14 family. Zinc-binding uS14 subfamily. In terms of assembly, part of the 30S ribosomal subunit. Contacts proteins S3 and S10. It depends on Zn(2+) as a cofactor.

Binds 16S rRNA, required for the assembly of 30S particles and may also be responsible for determining the conformation of the 16S rRNA at the A site. The protein is Small ribosomal subunit protein uS14 of Leptospira biflexa serovar Patoc (strain Patoc 1 / Ames).